The chain runs to 392 residues: 1-deoxy-D-xylulose 5-phosphate reductoisomerase (392 aa).

NADPH-binding residues include Thr-10, Gly-11, Ser-12, Ile-13, Asn-38, and Asn-124. A 1-deoxy-D-xylulose 5-phosphate-binding site is contributed by Lys-125. Glu-126 provides a ligand contact to NADPH. A Mn(2+)-binding site is contributed by Asp-150. Residues Ser-151, Glu-152, Ser-176, and His-199 each contribute to the 1-deoxy-D-xylulose 5-phosphate site. Residue Glu-152 coordinates Mn(2+). Residue Gly-205 coordinates NADPH. 1-deoxy-D-xylulose 5-phosphate-binding residues include Ser-212, Asn-217, Lys-218, and Glu-221. Glu-221 contacts Mn(2+).

Belongs to the DXR family. The cofactor is Mg(2+). Requires Mn(2+) as cofactor.

The catalysed reaction is 2-C-methyl-D-erythritol 4-phosphate + NADP(+) = 1-deoxy-D-xylulose 5-phosphate + NADPH + H(+). The protein operates within isoprenoid biosynthesis; isopentenyl diphosphate biosynthesis via DXP pathway; isopentenyl diphosphate from 1-deoxy-D-xylulose 5-phosphate: step 1/6. In terms of biological role, catalyzes the NADPH-dependent rearrangement and reduction of 1-deoxy-D-xylulose-5-phosphate (DXP) to 2-C-methyl-D-erythritol 4-phosphate (MEP). In Gloeobacter violaceus (strain ATCC 29082 / PCC 7421), this protein is 1-deoxy-D-xylulose 5-phosphate reductoisomerase.